The sequence spans 205 residues: Ephrin-A1 (205 aa).

The N-terminal stretch at 1–17 (MEFLWAPLLGLCCSLAA) is a signal peptide. Residues 18–151 (ADRHIVFWNS…KLKVTVNGKI (134 aa)) enclose the Ephrin RBD domain. Residue asparagine 26 is glycosylated (N-linked (GlcNAc...) asparagine). Intrachain disulfides connect cysteine 51–cysteine 92 and cysteine 80–cysteine 140. Serine 182 carries GPI-anchor amidated serine lipidation. Positions 183-205 (AAPRLFPLVWAVLLLPLLLLQTQ) are cleaved as a propeptide — removed in mature form.

The protein belongs to the ephrin family. In terms of assembly, monomer. Homodimer. Forms heterodimers with EPHA2. Binds to the receptor tyrosine kinases EPHA2, EPHA3, EPHA4, EPHA5, EPHA6 and EPHA7. Also binds with low affinity to EPHA1. In terms of processing, undergoes proteolysis by a metalloprotease to give rise to a soluble monomeric form. Post-translationally, N-Glycosylation is required for binding to EPHA2 receptor and inducing its internalization.

Its subcellular location is the cell membrane. The protein resides in the secreted. Functionally, cell surface GPI-bound ligand for Eph receptors, a family of receptor tyrosine kinases which are crucial for migration, repulsion and adhesion during neuronal, vascular and epithelial development. Binds promiscuously Eph receptors residing on adjacent cells, leading to contact-dependent bidirectional signaling into neighboring cells. Plays an important role in angiogenesis and tumor neovascularization. The recruitment of VAV2, VAV3 and PI3-kinase p85 subunit by phosphorylated EPHA2 is critical for EFNA1-induced RAC1 GTPase activation and vascular endothelial cell migration and assembly. Exerts anti-oncogenic effects in tumor cells through activation and down-regulation of EPHA2. Activates EPHA2 by inducing tyrosine phosphorylation which leads to its internalization and degradation. Acts as a negative regulator in the tumorigenesis of gliomas by down-regulating EPHA2 and FAK. Can evoke collapse of embryonic neuronal growth cone and regulates dendritic spine morphogenesis. This chain is Ephrin-A1 (Efna1), found in Rattus norvegicus (Rat).